The chain runs to 726 residues: Methyltransferase FGSG_00040 (726 aa).

3 TPR repeats span residues Ser-187–Val-220, Gln-224–Ser-257, and Glu-258–Asn-291. Residues Ala-336 to Arg-531 form the SET domain. Tyr-530 is an S-adenosyl-L-methionine binding site.

It belongs to the class V-like SAM-binding methyltransferase superfamily.

The protein operates within mycotoxin biosynthesis. Its function is as follows. Methyltransferase; part of the gene cluster that mediates the biosynthesis of gramillins A and B, bicyclic lipopeptides that induce cell death in maize leaves but not in wheat leaves. The nonribosomal peptide synthetase GRA1 incorporates respectively a glutamic adic (Glu), a leucine (Leu), a serine (Ser), a hydroxyglutamine (HOGln), a 2-amino decanoic acid, and 2 cysteins (CysB and CysA). The biosynthesis of 2-amino decanoic acid incorporated in gramillins could be initiated by a fatty acid synthase composed of the alpha and beta subunits FGSG_00036 and FGSG_11656. The cytochrome P450 monooxygenase FGSG_15680 could hydroxylate the fatty acid chain. Subsequent oxidation to the ketone by the oxidoreductase FGSG_00048 and transamination by aminotransferase FGSG_00049 could form 2-amino-decanoic acid. On the other hand, FGSG_15680 could also be responsible for the HO-modified glutamine at the gamma-position. Whether hydroxylation occurs on the fully assembled product or on the Gln residue prior to assembly into the gramillins requires further proof. The thioredoxin FGSG_00043 could also be required for the disulfide-bond formation between CysA and CysB. The specific involvement of the remaining proteins from the cluster is more difficult to discern, but could have broader regulatory (FGSG_00040 and FGSG_11657) or enzymatic functions (FGSG_00044 and FGSG_00045). The final C-domain of GRA1 does not possess the expected sequence of a termination CT domain, often implicated in macrocyclization and release of a cyclopeptidein fungal NRPs; and the thioesterase FGSG_00047 may act in concert with the terminal C-domain of GRA1 to catalyze the formation of the macrocyclic anhydride and release of the products. This Gibberella zeae (strain ATCC MYA-4620 / CBS 123657 / FGSC 9075 / NRRL 31084 / PH-1) (Wheat head blight fungus) protein is Methyltransferase FGSG_00040.